The chain runs to 149 residues: 3-hydroxyacyl-[acyl-carrier-protein] dehydratase FabZ (149 aa).

Residue His-48 is part of the active site.

This sequence belongs to the thioester dehydratase family. FabZ subfamily.

It localises to the cytoplasm. The enzyme catalyses a (3R)-hydroxyacyl-[ACP] = a (2E)-enoyl-[ACP] + H2O. Involved in unsaturated fatty acids biosynthesis. Catalyzes the dehydration of short chain beta-hydroxyacyl-ACPs and long chain saturated and unsaturated beta-hydroxyacyl-ACPs. The polypeptide is 3-hydroxyacyl-[acyl-carrier-protein] dehydratase FabZ (Thermomicrobium roseum (strain ATCC 27502 / DSM 5159 / P-2)).